The sequence spans 466 residues: ATP synthase subunit beta (466 aa).

155-162 (GGAGVGKT) lines the ATP pocket.

The protein belongs to the ATPase alpha/beta chains family. F-type ATPases have 2 components, CF(1) - the catalytic core - and CF(0) - the membrane proton channel. CF(1) has five subunits: alpha(3), beta(3), gamma(1), delta(1), epsilon(1). CF(0) has three main subunits: a(1), b(2) and c(9-12). The alpha and beta chains form an alternating ring which encloses part of the gamma chain. CF(1) is attached to CF(0) by a central stalk formed by the gamma and epsilon chains, while a peripheral stalk is formed by the delta and b chains.

It is found in the cell inner membrane. The enzyme catalyses ATP + H2O + 4 H(+)(in) = ADP + phosphate + 5 H(+)(out). Produces ATP from ADP in the presence of a proton gradient across the membrane. The catalytic sites are hosted primarily by the beta subunits. The protein is ATP synthase subunit beta of Bordetella bronchiseptica (strain ATCC BAA-588 / NCTC 13252 / RB50) (Alcaligenes bronchisepticus).